The chain runs to 913 residues: Protein ECT2 (913 aa).

N-acetylalanine is present on Ala2. 2 BRCT domains span residues 176–260 and 266–354; these read MLNL…AAVD and FKVP…MYLY. Thr359 carries the phosphothreonine; by PKC/PRKCI modification. Residues Ser367 and Ser370 each carry the phosphoserine modification. Thr373 is subject to Phosphothreonine. Ser376 carries the post-translational modification Phosphoserine. 2 short sequence motifs (nuclear localization signal) span residues 378 to 382 and 401 to 405; these read RKRRR and PRKRP. Disordered stretches follow at residues 389 to 415 and 427 to 450; these read QLSRETDLSPFPPRKRPSAEHSLSIGS and IHYGETPKSCAKSSRSSTPVPPKQ. Phosphothreonine; by CDK1 is present on Thr444. The DH domain maps to 452–641; that stretch reads ARWQVAKELY…KEVMTHINED (190 aa). A Glycyl lysine isopeptide (Lys-Gly) (interchain with G-Cter in SUMO2) cross-link involves residue Lys611. The PH domain maps to 675–794; it reads RVETVSLGEH…KMLCRHVANT (120 aa). Phosphoserine is present on residues Ser716 and Ser842. Position 846 is a phosphothreonine; by CDK1 (Thr846). Residues 853 to 874 form a disordered region; that stretch reads MALSSSHSSEGRSPPSSGKLAV. The span at 856–870 shows a compositional bias: low complexity; that stretch reads SSSHSSEGRSPPSSG. Phosphoserine occurs at positions 861 and 865.

In terms of assembly, homodimer. Homooligomer. Found in the centralspindlin complex. Interacts with NR1I3. Interacts (Thr-359 phosphorylated form) with PARD6A; the interaction is observed in cancer cells. Interacts (Thr-359 phosphorylated form) with PRKCI; the interaction is observed in cancer cells. Interacts with PKP4; the interaction is observed at the midbody. Interacts with RACGAP1; the interaction is direct, occurs in a microtubule-dependent manner, occurs at anaphase and during cytokinesis, is inhibited in metaphase by phosphorylation of ECT2 on Thr-373 and is stimulated in early anaphase by dephosphorylation of ECT2 probably on Thr-373 through CDK1 activity. Interacts with PLK1; the interaction is stimulated upon its phosphorylation on Thr-444. Interacts with RHOA; the interaction results in allosteric activation of ECT2. Interacts with KIF23, PARD3, PARD6B and PRKCQ. Interacts with NEDD9/HEF1. In terms of processing, phosphorylated by PLK1 in vitro. Hyperphosphorylated during the G2 phase of the cell cycle. Phosphorylation at Thr-373 occurs during the G2/M phase, relieves its auto-inhibition status and stimulates its GEF activity. Phosphorylation at Thr-444 in G2/M phase is required for subsequent binding with PLK1 and Rho exchange activation. Dephosphorylated at the time of cytokinesis. Phosphorylation at Thr-359 is required for its transformation activity in cancer cells. In terms of tissue distribution, highest expression in testis. Also detectable in brain, kidney, liver and spleen.

It localises to the nucleus. The protein resides in the cytoplasm. The protein localises to the cytoskeleton. It is found in the spindle. Its subcellular location is the cleavage furrow. It localises to the midbody. The protein resides in the cell junction. The protein localises to the tight junction. Its activity is regulated as follows. Autoinhibited by the C-terminal PH domain which folds back and binds to the surface of the DH domain, blocking binding of RHOA to the catalytic center of the DH domain. The 2nd BRCT domain is also involved in inhibition, probably by helping to impede RHOA binding. Allosterically activated by binding of activated GTP-bound RHOA to the PH domain which stimulates the release of PH inhibition and promotes the binding of substrate RHOA to the catalytic center. Binding of phosphorylated RACGAP1 to the N-terminal BRCT domain-containing region also releases autoinhibition. Guanine nucleotide exchange factor (GEF) that catalyzes the exchange of GDP for GTP. Promotes guanine nucleotide exchange on the Rho family members of small GTPases, like RHOA, RHOC, RAC1 and CDC42. Required for signal transduction pathways involved in the regulation of cytokinesis. Component of the centralspindlin complex that serves as a microtubule-dependent and Rho-mediated signaling required for the myosin contractile ring formation during the cell cycle cytokinesis. Regulates the translocation of RHOA from the central spindle to the equatorial region. Plays a role in the control of mitotic spindle assembly; regulates the activation of CDC42 in metaphase for the process of spindle fibers attachment to kinetochores before chromosome congression. Involved in the regulation of epithelial cell polarity; participates in the formation of epithelial tight junctions in a polarity complex PARD3-PARD6-protein kinase PRKCQ-dependent manner. Plays a role in the regulation of neurite outgrowth. Inhibits phenobarbital (PB)-induced NR1I3 nuclear translocation. Stimulates the activity of RAC1 through its association with the oncogenic PARD6A-PRKCI complex in cancer cells, thereby acting to coordinately drive tumor cell proliferation and invasion. Also stimulates genotoxic stress-induced RHOB activity in breast cancer cells leading to their cell death. In Mus musculus (Mouse), this protein is Protein ECT2 (Ect2).